Consider the following 332-residue polypeptide: MADKISVCVAGGGSWGTALGHLLARGGHDVSIWLRDDAVARTINRKHENPRYLPGLPLDPRLAATTDPAVLARPLVVLAVPCQQLRPWLAGHACHFQPGVTLVNAAKGIETGSLATCAEITAQELGGLNPRYAVLSGPSFAADVLRDLPTAVVLASYDEALGRYLRGVFSGPAFRCYSSTDVVGVEMGGALKNVMAIAAGTCDGLGLGANSRAALVTRGLAEMSRLGVARGAQAHTFMGLSGLGDLTLTCTDDLSRNRQVGLRLGRGEKLEHITQSLGMVAEGVKTTAAIHEMAQKLQVEAPLTRAVYGILYKEMAPPTVLSDLMARDLREE.

NADPH contacts are provided by S14, W15, R35, and K107. Sn-glycerol 3-phosphate is bound by residues K107, G137, and S139. A141 is a binding site for NADPH. Sn-glycerol 3-phosphate contacts are provided by K192, D245, S255, R256, and N257. K192 functions as the Proton acceptor in the catalytic mechanism. NADPH is bound at residue R256. Residues V280 and E282 each contribute to the NADPH site.

Belongs to the NAD-dependent glycerol-3-phosphate dehydrogenase family.

The protein resides in the cytoplasm. It carries out the reaction sn-glycerol 3-phosphate + NAD(+) = dihydroxyacetone phosphate + NADH + H(+). The enzyme catalyses sn-glycerol 3-phosphate + NADP(+) = dihydroxyacetone phosphate + NADPH + H(+). Its pathway is membrane lipid metabolism; glycerophospholipid metabolism. In terms of biological role, catalyzes the reduction of the glycolytic intermediate dihydroxyacetone phosphate (DHAP) to sn-glycerol 3-phosphate (G3P), the key precursor for phospholipid synthesis. The chain is Glycerol-3-phosphate dehydrogenase [NAD(P)+] from Desulfovibrio desulfuricans (strain ATCC 27774 / DSM 6949 / MB).